The primary structure comprises 441 residues: Cysteine--tRNA ligase (441 aa).

Position 24 (C24) interacts with Zn(2+). The short motif at 26-36 (PTVYNYIHIGN) is the 'HIGH' region element. Positions 204, 230, and 234 each coordinate Zn(2+). Residues 262-266 (KMSKS) carry the 'KMSKS' region motif. K265 is an ATP binding site.

The protein belongs to the class-I aminoacyl-tRNA synthetase family. As to quaternary structure, monomer. Requires Zn(2+) as cofactor.

It localises to the cytoplasm. It carries out the reaction tRNA(Cys) + L-cysteine + ATP = L-cysteinyl-tRNA(Cys) + AMP + diphosphate. The protein is Cysteine--tRNA ligase of Mycoplasma capricolum subsp. capricolum (strain California kid / ATCC 27343 / NCTC 10154).